The chain runs to 531 residues: Peptide chain release factor 3 (531 aa).

Residues 10–278 form the tr-type G domain; it reads RRRRTFAIIS…SLIDWAPAPK (269 aa). GTP is bound by residues 19–26, 87–91, and 141–144; these read SHPDAGKT, DTPGH, and NKYD.

This sequence belongs to the TRAFAC class translation factor GTPase superfamily. Classic translation factor GTPase family. PrfC subfamily.

The protein localises to the cytoplasm. In terms of biological role, increases the formation of ribosomal termination complexes and stimulates activities of RF-1 and RF-2. It binds guanine nucleotides and has strong preference for UGA stop codons. It may interact directly with the ribosome. The stimulation of RF-1 and RF-2 is significantly reduced by GTP and GDP, but not by GMP. The polypeptide is Peptide chain release factor 3 (Neisseria meningitidis serogroup B (strain ATCC BAA-335 / MC58)).